The sequence spans 84 residues: Small ribosomal subunit protein uS15 (84 aa).

The protein belongs to the universal ribosomal protein uS15 family. As to quaternary structure, part of the 30S ribosomal subunit. Forms a bridge to the 50S subunit in the 70S ribosome, contacting the 23S rRNA.

Its function is as follows. One of the primary rRNA binding proteins, it binds directly to 16S rRNA where it helps nucleate assembly of the platform of the 30S subunit by binding and bridging several RNA helices of the 16S rRNA. In terms of biological role, forms an intersubunit bridge (bridge B4) with the 23S rRNA of the 50S subunit in the ribosome. This Thermosipho melanesiensis (strain DSM 12029 / CIP 104789 / BI429) protein is Small ribosomal subunit protein uS15.